The chain runs to 449 residues: UDP-N-acetylmuramoylalanine--D-glutamate ligase (449 aa).

Position 118–124 (118–124) interacts with ATP; the sequence is GTNGKTT.

Belongs to the MurCDEF family.

The protein resides in the cytoplasm. It catalyses the reaction UDP-N-acetyl-alpha-D-muramoyl-L-alanine + D-glutamate + ATP = UDP-N-acetyl-alpha-D-muramoyl-L-alanyl-D-glutamate + ADP + phosphate + H(+). Its pathway is cell wall biogenesis; peptidoglycan biosynthesis. Its function is as follows. Cell wall formation. Catalyzes the addition of glutamate to the nucleotide precursor UDP-N-acetylmuramoyl-L-alanine (UMA). This is UDP-N-acetylmuramoylalanine--D-glutamate ligase from Staphylococcus epidermidis (strain ATCC 12228 / FDA PCI 1200).